The following is a 1331-amino-acid chain: Contactin-associated protein-like 2 (1331 aa).

Positions 1–27 (MQAAPRAGCGAALLLWIVSSCLCRAWT) are cleaved as a signal peptide. Residues 28–1262 (APSTSQKCDE…IRNGVNRNSA (1235 aa)) are Extracellular-facing. Residues 35-181 (CDEPLVSGLP…IGLRIEVYGC (147 aa)) enclose the F5/8 type C domain. Cysteines 35 and 181 form a disulfide. In terms of domain architecture, Laminin G-like 1 spans 216 to 368 (FKTSESEGVI…SNVGNLSFSC (153 aa)). 8 N-linked (GlcNAc...) asparagine glycosylation sites follow: Asn289, Asn346, Asn363, Asn379, Asn436, Asn506, Asn507, and Asn546. Cysteines 336 and 368 form a disulfide. Positions 401–552 (FRTWNPNGLL…SFANVSIDMC (152 aa)) constitute a Laminin G-like 2 domain. Cystine bridges form between Cys520-Cys552, Cys558-Cys569, Cys563-Cys578, and Cys580-Cys590. In terms of domain architecture, EGF-like 1 spans 554–591 (IIDRCVPNHCEHGGKCSQTWDSFKCTCDETGYSGATCH). Residues 592–798 (NSIYEPSCEA…LRCQGDRNYW (207 aa)) enclose the Fibrinogen C-terminal domain. Residues Asn630 and Asn735 are each glycosylated (N-linked (GlcNAc...) asparagine). The region spanning 799-963 (NAASFPNPSS…KVTSGFISGC (165 aa)) is the Laminin G-like 3 domain. 4 disulfide bridges follow: Cys936–Cys963, Cys967–Cys980, Cys974–Cys989, and Cys991–Cys1001. The 40-residue stretch at 963–1002 (CSGHCTSYGTNCENGGKCLERYHGYSCDCSNTAYDGTFCN) folds into the EGF-like 2 domain. The disordered stretch occupies residues 1026-1045 (ARDSSSRVDNAPDQQNSHPD). One can recognise a Laminin G-like 4 domain in the interval 1055–1214 (FSTTKAPCIL…IQGELVESNC (160 aa)). N-linked (GlcNAc...) asparagine glycosylation is found at Asn1116 and Asn1198. Cys1178 and Cys1214 are joined by a disulfide. Residues 1263–1283 (IIGGVIAVVIFTILCTLVFLI) traverse the membrane as a helical segment. Topologically, residues 1284–1331 (RYMFRHKGTYHTNEAKGAESAESADAAIMNNDPNFTETIDESKKEWLI) are cytoplasmic. Phosphoserine is present on residues Ser1303 and Ser1306.

This sequence belongs to the neurexin family. As to quaternary structure, interacts (via C-terminus) with KCNA2. Interacts with GPR37. In terms of tissue distribution, predominantly expressed in nervous system.

It localises to the membrane. The protein localises to the cell projection. The protein resides in the axon. It is found in the cell junction. Its subcellular location is the paranodal septate junction. Required for gap junction formation. Required, with CNTNAP1, for radial and longitudinal organization of myelinated axons. Plays a role in the formation of functional distinct domains critical for saltatory conduction of nerve impulses in myelinated nerve fibers. Demarcates the juxtaparanodal region of the axo-glial junction. The polypeptide is Contactin-associated protein-like 2 (CNTNAP2) (Homo sapiens (Human)).